The sequence spans 319 residues: Cytochrome f (319 aa).

Positions 1-35 are cleaved as a signal peptide; sequence METRNIFSWIKEQITRSISVSLMIYIITRTAVSNA. Positions 36, 56, 59, and 60 each coordinate heme. Residues 285–305 traverse the membrane as a helical segment; it reads VQGLLFFLASVILAQIFLVLK.

The protein belongs to the cytochrome f family. The 4 large subunits of the cytochrome b6-f complex are cytochrome b6, subunit IV (17 kDa polypeptide, petD), cytochrome f and the Rieske protein, while the 4 small subunits are PetG, PetL, PetM and PetN. The complex functions as a dimer. The cofactor is heme.

Its subcellular location is the plastid. It is found in the chloroplast thylakoid membrane. In terms of biological role, component of the cytochrome b6-f complex, which mediates electron transfer between photosystem II (PSII) and photosystem I (PSI), cyclic electron flow around PSI, and state transitions. The polypeptide is Cytochrome f (Coffea arabica (Arabian coffee)).